The primary structure comprises 764 residues: MTIVGHILGFPRIGLHRELKYALEYYWDGKIKEDKLLEIGRTLRIRHWKQQKDSGIDWISVGDFAWYDHVLTTSLMLNNIPDRHRIGQENINLNTLFRISRGYSLDKKLIPPSEMKKWFNTNYHYIVPEFVPNQEFKLNWTQLFDEIDEALSLKYTVKPILLGPISYLWLGKIKGKKFDRLSLLPNLLSVYQEILDILLSKNIDWIQIDEPILVLELPLQWLNAYLSAYEQLHGKVKLLLTTYFDSIYHQLDIITRLKIDGLHVDLVSNPDNIPLLHARLPKHWTLSAGVVNGRNVWKTNLHDWFKKLYPLVGERSLWIGSSCSLLHSPIDLNTEIKLDKHIKEWFAFALQKCYEIKMLCAALNAENTSDATYEDTLSEYYISNNLRSYSSTIHNIQVKKRLEHIDEISYSRSSPYTTRVTLQHKKLNLPLFPTTTIGSFPQTEEIRKLRSRFKNNQINKEDYHLNIKNYIKKIIMEQEKLDLDILVHGEPERNDMVEYFGENLNGFIFTQNGWVQSYGSRCVKPPVIIGDISRSKPITIEWISYAQSLTNKPIKGILTGPVTIMSWSFPREDMQRKTIALQLALSIRDEVIDLEKSGIGIIQIDEPALREGLPLKRSDQKQYLEWAINVFRITVSSVKDDTQIHTHMCYSEFSDIIYAILALDADVISIEAARSDEKILKSIRHVIKNLNEIGPGIYDIHSPNKPTQNDLIRRINQLLKYIPEQRLWINPDCGLKTRSWPEIKHSLNNMVSAAKLLRKQFYSS.

Residues 17-20 (RELK) and lysine 117 each bind 5-methyltetrahydropteroyltri-L-glutamate. L-homocysteine-binding positions include 437-439 (IGS) and glutamate 490. L-methionine-binding positions include 437–439 (IGS) and glutamate 490. 5-methyltetrahydropteroyltri-L-glutamate-binding positions include 521–522 (RC) and tryptophan 567. Residue aspartate 605 participates in L-homocysteine binding. Aspartate 605 provides a ligand contact to L-methionine. Residue glutamate 611 participates in 5-methyltetrahydropteroyltri-L-glutamate binding. 3 residues coordinate Zn(2+): histidine 647, cysteine 649, and glutamate 671. The Proton donor role is filled by histidine 701. Cysteine 733 is a binding site for Zn(2+).

Belongs to the vitamin-B12 independent methionine synthase family. It depends on Zn(2+) as a cofactor.

The catalysed reaction is 5-methyltetrahydropteroyltri-L-glutamate + L-homocysteine = tetrahydropteroyltri-L-glutamate + L-methionine. It functions in the pathway amino-acid biosynthesis; L-methionine biosynthesis via de novo pathway; L-methionine from L-homocysteine (MetE route): step 1/1. Its function is as follows. Catalyzes the transfer of a methyl group from 5-methyltetrahydrofolate to homocysteine resulting in methionine formation. The protein is 5-methyltetrahydropteroyltriglutamate--homocysteine methyltransferase of Blochmanniella pennsylvanica (strain BPEN).